The chain runs to 305 residues: N-acetylmuramic acid 6-phosphate etherase (305 aa).

The SIS domain maps to 59–222 (TSKALGKGGR…STGVMVKLGK (164 aa)). Catalysis depends on Glu-87, which acts as the Proton donor. The active site involves Glu-118.

Belongs to the GCKR-like family. MurNAc-6-P etherase subfamily. In terms of assembly, homodimer.

It catalyses the reaction N-acetyl-D-muramate 6-phosphate + H2O = N-acetyl-D-glucosamine 6-phosphate + (R)-lactate. Its pathway is amino-sugar metabolism; N-acetylmuramate degradation. Specifically catalyzes the cleavage of the D-lactyl ether substituent of MurNAc 6-phosphate, producing GlcNAc 6-phosphate and D-lactate. This Crocosphaera subtropica (strain ATCC 51142 / BH68) (Cyanothece sp. (strain ATCC 51142)) protein is N-acetylmuramic acid 6-phosphate etherase.